A 325-amino-acid polypeptide reads, in one-letter code: uncharacterized protein (325 aa).

A helical transmembrane segment spans residues 67-87 (WIPFFLLFSSVVVLGGLWWLG).

The protein localises to the membrane. This is an uncharacterized protein from Synechocystis sp. (strain ATCC 27184 / PCC 6803 / Kazusa).